Consider the following 833-residue polypeptide: Transcription factor MBP1 (833 aa).

In terms of domain architecture, HTH APSES-type spans 5 to 111 (IYSARYSGVD…FTQTDGSASP (107 aa)). A DNA-binding region (H-T-H motif) is located at residues 36–57 (ATHILKAANFAKAKRTRILEKE). Disordered regions lie at residues 104 to 223 (QTDG…QSPT) and 280 to 329 (QQSS…SPII). A Phosphoserine modification is found at S110. A compositionally biased stretch (basic residues) spans 115-129 (PKHHHASKVDRKKAI). Over residues 139-149 (ETKRNNKKAEE) the composition is skewed to basic and acidic residues. Over residues 201-223 (PNSSISTTQLPSIRSTMGPQSPT) the composition is skewed to polar residues. The segment covering 280–307 (QQSSLIQTQQTESMATSVSSSPSLPTSP) has biased composition (low complexity). T325 bears the Phosphothreonine mark. A phosphoserine mark is found at S326 and S330. ANK repeat units lie at residues 394–423 (ELHT…SIRS) and 512–541 (NGDT…LTTI). Position 827 is a phosphoserine (S827).

In terms of assembly, component of the transcription complex MCB-binding factor (MBF) composed of SWI6 and MBP1. Interacts with MSA1.

Its subcellular location is the nucleus. Functionally, binds to MCB elements (Mlu I cell cycle box) found in the promoter of most DNA synthesis genes. Transcriptional activation by MBF has an important role in the transition from G1 to S phase. It may have a dual role in that it behaves as an activator of transcription at the G1-S boundary and as a repressor during other stages of the cell cycle. The polypeptide is Transcription factor MBP1 (MBP1) (Saccharomyces cerevisiae (strain ATCC 204508 / S288c) (Baker's yeast)).